We begin with the raw amino-acid sequence, 354 residues long: uncharacterized protein (354 aa).

Residues 309–326 show a composition bias toward polar residues; the sequence is VNSANSINTANTRSQTGG. The segment at 309 to 333 is disordered; the sequence is VNSANSINTANTRSQTGGQDEEDFE. A coiled-coil region spans residues 326–353; sequence GQDEEDFEKKYKKYKNKYAKLKNQKTSN.

It is found in the virion. This is an uncharacterized protein from Acanthamoeba polyphaga (Amoeba).